The following is a 1042-amino-acid chain: Exosome RNA helicase MTR4 (1042 aa).

N-acetylalanine is present on alanine 2. Residues 16–74 (DSTTAAGTKKDKEKDKGKWKGPPGSADKAGKRFDGKLQSESTNNGKNKRDVDFEGTDEP) are disordered. The span at 23-33 (TKKDKEKDKGK) shows a compositional bias: basic and acidic residues. Lysine 24 is covalently cross-linked (Glycyl lysine isopeptide (Lys-Gly) (interchain with G-Cter in SUMO2)). Residue serine 40 is modified to Phosphoserine. The span at 43–52 (KAGKRFDGKL) shows a compositional bias: basic and acidic residues. 2 positions are modified to N6-acetyllysine: lysine 51 and lysine 78. ATP contacts are provided by residues isoleucine 139, 161–168 (AHTSAGKT), serine 164, glycine 166, lysine 167, and threonine 168. The Helicase ATP-binding domain occupies 148–304 (IQCVDNNQSV…WICHLHKQPC (157 aa)). The DEIH box signature appears at 252–255 (DEIH). Residue lysine 358 forms a Glycyl lysine isopeptide (Lys-Gly) (interchain with G-Cter in SUMO2) linkage. The Helicase C-terminal domain occupies 405–577 (QMTKLDFNTD…NMVLNLLRVE (173 aa)). Glycyl lysine isopeptide (Lys-Gly) (interchain with G-Cter in SUMO2) cross-links involve residues lysine 684 and lysine 723.

The protein belongs to the helicase family. SKI2 subfamily. As to quaternary structure, component of a TRAMP-like complex, an ATP-dependent exosome regulatory complex consisting of a helicase (MTREX), an oligadenylate polymerase (TENT4B or TENT4A), and a substrate specific RNA-binding factor (ZCCHC7 or ZCCHC8). Several TRAMP-like complexes exist with specific compositions and are associated with nuclear, or nucleolar RNA exosomes. Identified in the spliceosome C complex. Component of the poly(A) tail exosome targeting (PAXT) complex made of PABPN1, ZFC3H1 and MTREX that directs a subset of long and polyadenylated poly(A) RNAs for exosomal degradation. Component of the nuclear exosome targeting (NEXT) complex composed of MTREX, ZCCHC8, and RBM7 that directs a subset of non-coding short-lived RNAs for exosomal degradation. Interacts with ZCCHC8; this interaction bridges the interaction between RBM7 and MTREX. Binds to ZFC3H1 and RBM7 in a RNase-insensitive manner. Interacts with EXOSC10; the interaction mediates the association of MTREX with nuclear RNA exosomes. Interacts with isoform 1 of NVL in an ATP-dependent manner; the interaction is required to associate NVL with nuclear RNA exosome. Interacts with WDR74; the interaction dissociation in a late stage of rRNA synthesis is required for appropriate maturation of pre-60S particles and depends on the ATPase activity of NVL. Interacts with MPHOSPH6. Interacts with the RNA cap-binding complex proteins NCBP1 and SRRT. Interacts with NRDE2; the interaction is direct and negatively regulates MTREX function in exosomal degradation by changing its conformation precluding interaction with ZFC3H1, the RNA cap-binding complex proteins NCBP1 and SRRT, and association with the exosome. Associates with the RNA exosome complex.

The protein resides in the nucleus. It localises to the nucleoplasm. The protein localises to the nucleolus. Its subcellular location is the nucleus speckle. It catalyses the reaction ATP + H2O = ADP + phosphate + H(+). Its activity is regulated as follows. Activated when MTREX is incorporated into NEXT complex an the nuclear RNA exosome complex. Its function is as follows. Catalyzes the ATP-dependent unwinding of RNA duplexes with a single-stranded 3' RNA extension. Central subunit of many protein complexes, namely TRAMP-like, nuclear exosome targeting (NEXT) and poly(A) tail exosome targeting (PAXT). NEXT functions as an RNA exosome cofactor that directs a subset of non-coding short-lived RNAs for exosomal degradation. NEXT is involved in surveillance and turnover of aberrant transcripts and non-coding RNAs. PAXT directs a subset of long and polyadenylated poly(A) RNAs for exosomal degradation. The RNA exosome is fundamental for the degradation of RNA in eukaryotic nuclei. Substrate targeting is facilitated by its cofactor ZCCHC8, which links to RNA-binding protein adapters. Associated with the RNA exosome complex and involved in the 3'-processing of the 7S pre-RNA to the mature 5.8S rRNA. May be involved in pre-mRNA splicing. In the context of NEXT complex can also in vitro unwind DNA:RNA heteroduplexes with a 3' poly (A) RNA tracking strand. Can promote unwinding and degradation of structured RNA substrates when associated with the nuclear exosome and its cofactors. Can displace a DNA strand while translocating on RNA to ultimately degrade the RNA within a DNA/RNA heteroduplex. Plays a role in DNA damage response. The chain is Exosome RNA helicase MTR4 from Homo sapiens (Human).